We begin with the raw amino-acid sequence, 273 residues long: Signal recognition particle subunit SEC65 (273 aa).

The segment at 25-71 (PSLRTPIAPKITPKVVRSQDQENPAFLPGTNNNSNSNNNSSNEKEQL) is disordered. Residues 55–65 (NNNSNSNNNSS) show a composition bias toward low complexity.

Fungal signal recognition particle (SRP) complex consists of a 7S RNA molecule (scR1) and at least six protein subunits: SRP72, SRP68, SRP54, SEC65, SRP21 and SRP14.

The protein localises to the cytoplasm. In terms of biological role, signal-recognition-particle (SRP) assembly has a crucial role in targeting secretory proteins to the rough endoplasmic reticulum (ER) membrane. SRP is required for the cotranslational protein translocation for ER import and preferentially recognizes strongly hydrophobic signal sequences. It is involved in targeting the nascent chain-ribosome (RNC) complex to the ER and is proposed to participate in the arrest of nascent chain elongation during membrane targeting. SEC65 is required for SRP integrity. This Saccharomyces cerevisiae (strain ATCC 204508 / S288c) (Baker's yeast) protein is Signal recognition particle subunit SEC65 (SEC65).